Reading from the N-terminus, the 1457-residue chain is Eye-specific diacylglycerol kinase (1457 aa).

3 disordered regions span residues 1-123 (MQQQ…SSEA), 136-177 (RSHS…PPCI), and 207-339 (YSNT…QPTT). 3 stretches are compositionally biased toward low complexity: residues 22-62 (SATT…LRTT), 98-115 (SQRASSSLLKQQSSSSAS), and 141-154 (DSATASAGSDDSGT). The span at 214–253 (ASEDEDEVEGHNAEEEEEGSAAIEDAEEETTEAATEEADE) shows a compositional bias: acidic residues. Residues 254 to 266 (DPRTEVESEHDHD) show a composition bias toward basic and acidic residues. Basic residues predominate over residues 294 to 303 (RLPRQMRRHT). 2 Phorbol-ester/DAG-type zinc fingers span residues 591 to 641 (HYWK…TLAC) and 661 to 724 (HHWV…GEEC). A disordered region spans residues 758 to 799 (NNAASGSGGGGAGGGAGGGGGKSKKQTQRRQKGKEEKKEPRA). Positions 763–778 (GSGGGGAGGGAGGGGG) are enriched in gly residues. Positions 779-789 (KSKKQTQRRQK) are enriched in basic residues. A DAGKc domain is found at 808–944 (PEVIPVIVFI…MDRWRVKVTP (137 aa)). A disordered region spans residues 1264-1302 (TPDQERSFAAFSQRQAQNERRQMDQAQGRGPGSTDEDLQ). 4 ANK repeats span residues 1320-1349 (QTSDAILLAAQSGDLNMLRALHEQGYSLQS), 1353-1382 (NGQTALHFACKYNHRDIVKYIIASATRRLI), 1389-1418 (LGQTALHIAAEQNRRDICVMLVAAGAHLDT), and 1422-1451 (GGNTPMMVAFNKNANEIATYLESKQGTQPV).

Belongs to the eukaryotic diacylglycerol kinase family. In terms of tissue distribution, expressed specifically in adult eye.

It is found in the membrane. It catalyses the reaction a 1,2-diacyl-sn-glycerol + ATP = a 1,2-diacyl-sn-glycero-3-phosphate + ADP + H(+). Required for the maintenance of phospholipid turnover within the photoreceptor. The sequence is that of Eye-specific diacylglycerol kinase (rdgA) from Drosophila melanogaster (Fruit fly).